Reading from the N-terminus, the 339-residue chain is tRNA pseudouridine synthase B (339 aa).

Aspartate 40 serves as the catalytic Nucleophile. The region spanning 262 to 307 (FRRLSKFAYREEFEENTERSTAAYTLVREDANTGLTYKLPLEVELS) is the RPE1 insert domain.

It belongs to the pseudouridine synthase TruB family. Type 1 subfamily.

It carries out the reaction uridine(55) in tRNA = pseudouridine(55) in tRNA. Functionally, responsible for synthesis of pseudouridine from uracil-55 in the psi GC loop of transfer RNAs. This chain is tRNA pseudouridine synthase B, found in Rickettsia felis (strain ATCC VR-1525 / URRWXCal2) (Rickettsia azadi).